The primary structure comprises 261 residues: Cytochrome c oxidase subunit 3 (261 aa).

6 helical membrane passes run 31 to 51 (LVLWFHTGNIILLFTGLLLLI), 82 to 102 (PMILFITSEVCFFFAFFWAFF), 126 to 146 (PFLVPLLNTAVLLSSGVTITW), 159 to 179 (AIQALFLTVVLGIYFTILQAW), 197 to 217 (FFVATGFHGLHVIIGTTFLLV), and 239 to 259 (AWYWHFVDVVWLFLYVCIYWW).

It belongs to the cytochrome c oxidase subunit 3 family. Component of the cytochrome c oxidase (complex IV, CIV), a multisubunit enzyme composed of a catalytic core of 3 subunits and several supernumerary subunits. The complex exists as a monomer or a dimer and forms supercomplexes (SCs) in the inner mitochondrial membrane with ubiquinol-cytochrome c oxidoreductase (cytochrome b-c1 complex, complex III, CIII).

The protein resides in the mitochondrion inner membrane. It carries out the reaction 4 Fe(II)-[cytochrome c] + O2 + 8 H(+)(in) = 4 Fe(III)-[cytochrome c] + 2 H2O + 4 H(+)(out). Component of the cytochrome c oxidase, the last enzyme in the mitochondrial electron transport chain which drives oxidative phosphorylation. The respiratory chain contains 3 multisubunit complexes succinate dehydrogenase (complex II, CII), ubiquinol-cytochrome c oxidoreductase (cytochrome b-c1 complex, complex III, CIII) and cytochrome c oxidase (complex IV, CIV), that cooperate to transfer electrons derived from NADH and succinate to molecular oxygen, creating an electrochemical gradient over the inner membrane that drives transmembrane transport and the ATP synthase. Cytochrome c oxidase is the component of the respiratory chain that catalyzes the reduction of oxygen to water. Electrons originating from reduced cytochrome c in the intermembrane space (IMS) are transferred via the dinuclear copper A center (CU(A)) of subunit 2 and heme A of subunit 1 to the active site in subunit 1, a binuclear center (BNC) formed by heme A3 and copper B (CU(B)). The BNC reduces molecular oxygen to 2 water molecules using 4 electrons from cytochrome c in the IMS and 4 protons from the mitochondrial matrix. In Paracentrotus lividus (Common sea urchin), this protein is Cytochrome c oxidase subunit 3 (COIII).